A 179-amino-acid polypeptide reads, in one-letter code: Large ribosomal subunit protein uL5 (179 aa).

The protein belongs to the universal ribosomal protein uL5 family. In terms of assembly, part of the 50S ribosomal subunit; part of the 5S rRNA/L5/L18/L25 subcomplex. Contacts the 5S rRNA and the P site tRNA. Forms a bridge to the 30S subunit in the 70S ribosome.

Functionally, this is one of the proteins that bind and probably mediate the attachment of the 5S RNA into the large ribosomal subunit, where it forms part of the central protuberance. In the 70S ribosome it contacts protein S13 of the 30S subunit (bridge B1b), connecting the 2 subunits; this bridge is implicated in subunit movement. Contacts the P site tRNA; the 5S rRNA and some of its associated proteins might help stabilize positioning of ribosome-bound tRNAs. The protein is Large ribosomal subunit protein uL5 of Saccharophagus degradans (strain 2-40 / ATCC 43961 / DSM 17024).